A 154-amino-acid chain; its full sequence is SKP1-like protein 13 (154 aa).

The interaction with the F-box domain of F-box proteins stretch occupies residues 96–154 (MLAANYLNIKDLLDLGCQTVADMITGKKPDEIRALLGIENDFTPEEEEEIRKENQWAFE).

This sequence belongs to the SKP1 family. Part of a SCF (SKP1-cullin-F-box) protein ligase complex. Interacts with ADO3/FKF1, EBF1, PP2A13, SKIP15, SKIP16, CPR1/CPR30, At1g55000, At3g61590, At1g67340, At1g78100, At3g04660, At4g38940, At4g39550 and At5g49610. Mostly expressed in inflorescences, and, to a lower extent, in seedlings and siliques. Also detected in cotyledons, leaves, pollen and seeds.

It localises to the nucleus. The protein operates within protein modification; protein ubiquitination. Involved in ubiquitination and subsequent proteasomal degradation of target proteins. Together with CUL1, RBX1 and a F-box protein, it forms a SCF E3 ubiquitin ligase complex. The functional specificity of this complex depends on the type of F-box protein. In the SCF complex, it serves as an adapter that links the F-box protein to CUL1. This chain is SKP1-like protein 13 (ASK13), found in Arabidopsis thaliana (Mouse-ear cress).